The primary structure comprises 495 residues: EF-hand calcium-binding domain-containing protein 14 (495 aa).

2 disordered regions span residues 1–50 and 381–404; these read MKKR…EEEE and TNKP…FTSK. Residue serine 17 is modified to Phosphoserine. The span at 18-31 shows a compositional bias: basic residues; sequence RRKKPKKGPSSHRL. Over residues 37 to 50 the composition is skewed to acidic residues; it reads PDSDSESSSEEEEE. 2 consecutive EF-hand domains span residues 434-463 and 464-495; these read SSTE…WTSL and GSAM…ALGI. Residues aspartate 477, aspartate 479, aspartate 481, arginine 483, and glutamate 488 each coordinate Ca(2+).

This Homo sapiens (Human) protein is EF-hand calcium-binding domain-containing protein 14 (EFCAB14).